The chain runs to 139 residues: Transmembrane protein 250 (139 aa).

2 helical membrane passes run 56–76 (FLLY…LAAL) and 116–136 (VYGI…FMVF).

(Microbial infection) Interacts with herpes simplex virus 1/HHV-1 protein CVC2/UL25.

Its subcellular location is the membrane. The protein resides in the nucleus. The protein localises to the cytoplasm. Its function is as follows. May play a role in cell proliferation by promoting progression into S phase. Functionally, (Microbial infection) Promotes human herpes simplex virus 1/HHV-1 proliferation. The sequence is that of Transmembrane protein 250 from Homo sapiens (Human).